We begin with the raw amino-acid sequence, 382 residues long: Draxin-A (382 aa).

The signal sequence occupies residues 1–22; it reads MMSSSWCLPLALLFSTLAVSHS. Disordered stretches follow at residues 28–213, 233–252, and 275–297; these read THAK…PPSP, LPTL…GKMQ, and VDAW…SGNV. The segment covering 73-82 has biased composition (low complexity); it reads RGAKASSGAG. Residues 139–149 show a composition bias toward basic residues; that stretch reads GPRKGRGQGHG. Positions 190–201 are enriched in low complexity; it reads SVSSAAAATSPS. A compositionally biased stretch (basic residues) spans 281-290; sequence SRKKDKRRSK. Residues Asn291 and Asn296 are each glycosylated (N-linked (GlcNAc...) asparagine).

This sequence belongs to the draxin family.

It is found in the secreted. Chemorepulsive axon guidance protein required for the development of spinal cord and forebrain commissures. Acts as a chemorepulsive guidance protein for commissural axons during development. Able to inhibit or repel neurite outgrowth from dorsal spinal cord. The polypeptide is Draxin-A (draxin-A) (Salmo salar (Atlantic salmon)).